The sequence spans 723 residues: Transmembrane channel-like protein 7 (723 aa).

2 disordered regions span residues 1–28 (MSESSGSALQPGRPSRQPAVHPENLSLD) and 51–71 (RRRTTVHSRDKQSGTLLKPTD). The Extracellular segment spans residues 1 to 168 (MSESSGSALQ…GIQSYFSFLR (168 aa)). The N-linked (GlcNAc...) asparagine glycan is linked to N24. The N-linked (GlcNAc...) asparagine glycan is linked to N84. A Phosphoserine modification is found at S89. A glycan (N-linked (GlcNAc...) asparagine) is linked at N96. Residues 169 to 189 (FLVLLNLVIFLIIFMLVLLPV) traverse the membrane as a helical segment. Over 190–219 (LLTKYKITNSSFVLIPFKDMDKQCTVYPVS) the chain is Cytoplasmic. The helical transmembrane segment at 220 to 240 (SSGLIYFYSYIIDLLSGTGFL) threads the bilayer. Topologically, residues 241-263 (EETSLFYGHYTIDGVKFQNFTYD) are extracellular. N-linked (GlcNAc...) asparagine glycosylation is present at N259. Residues 264–284 (LPLAYLLSTIASLALSLLWIV) traverse the membrane as a helical segment. At 285-362 (KRSVEGFKIN…EETIRIYSLR (78 aa)) the chain is on the cytoplasmic side. Residues 363–383 (LFLNCIVLAVLGACFYAIYVA) traverse the membrane as a helical segment. The Extracellular segment spans residues 384–404 (TVFSQEHMKKEIDKMVFGENL). The chain crosses the membrane as a helical span at residues 405–425 (FILYLPSIVITLANFITPMIF). Residues 426 to 494 (AKIIRYEDYS…PCWETQVGQE (69 aa)) are Cytoplasmic-facing. The helical transmembrane segment at 495–515 (MYKLMIFDFIIILAVTLFVDF) threads the bilayer. At 516–555 (PRKLLVTYCSSCKLIQCWGQQEFAIPDNVLGIVYGQTICW) the chain is on the extracellular side. A helical membrane pass occupies residues 556–576 (IGAFFSPLLPAIATLKFIIIF). The Cytoplasmic portion of the chain corresponds to 577 to 601 (YVKEWSLLYTCRPSPRPFRASNSNF). Residues 602-622 (FFLLVLLIGLCLAIIPLTISI) traverse the membrane as a helical segment. Over 623-665 (SRIPSSKACGPFTNFNTTWEVIPKTVSTFPSSLQSFIHGVTSE) the chain is Extracellular. Residue N638 is glycosylated (N-linked (GlcNAc...) asparagine). A helical transmembrane segment spans residues 666-686 (AFAVPFFMIICLIMFYFIALA). The Cytoplasmic portion of the chain corresponds to 687–723 (GAHKRVVIQLREQLSLESRDKCYLIQKLTEAQRDMRN).

It belongs to the TMC family. As to quaternary structure, interacts with PIEZO2; the interaction inhibits PIEZO2-conducted mechanically activated currents.

The protein resides in the membrane. Its function is as follows. Acts as an inhibitory modulator of PIEZO2 mechanosensitive channel in dorsal root ganglion (DRG) neurons through physical interactions or interference with the interaction between PIEZO2 and the cytoskeleton. This is Transmembrane channel-like protein 7 from Homo sapiens (Human).